A 141-amino-acid chain; its full sequence is Nucleoside diphosphate kinase (141 aa).

6 residues coordinate ATP: K11, F59, R87, T93, R104, and N114. Catalysis depends on H117, which acts as the Pros-phosphohistidine intermediate.

Belongs to the NDK family. As to quaternary structure, homotetramer. Mg(2+) is required as a cofactor.

The protein resides in the cytoplasm. It carries out the reaction a 2'-deoxyribonucleoside 5'-diphosphate + ATP = a 2'-deoxyribonucleoside 5'-triphosphate + ADP. The enzyme catalyses a ribonucleoside 5'-diphosphate + ATP = a ribonucleoside 5'-triphosphate + ADP. Major role in the synthesis of nucleoside triphosphates other than ATP. The ATP gamma phosphate is transferred to the NDP beta phosphate via a ping-pong mechanism, using a phosphorylated active-site intermediate. This chain is Nucleoside diphosphate kinase, found in Actinobacillus succinogenes (strain ATCC 55618 / DSM 22257 / CCUG 43843 / 130Z).